The following is a 612-amino-acid chain: Dihydroxy-acid dehydratase (612 aa).

Mg(2+) is bound at residue D81. Residue C122 participates in [2Fe-2S] cluster binding. Mg(2+) contacts are provided by D123 and K124. K124 carries the post-translational modification N6-carboxylysine. A [2Fe-2S] cluster-binding site is contributed by C196. E492 contacts Mg(2+). S518 functions as the Proton acceptor in the catalytic mechanism.

The protein belongs to the IlvD/Edd family. In terms of assembly, homodimer. Requires [2Fe-2S] cluster as cofactor. Mg(2+) serves as cofactor.

The catalysed reaction is (2R)-2,3-dihydroxy-3-methylbutanoate = 3-methyl-2-oxobutanoate + H2O. It carries out the reaction (2R,3R)-2,3-dihydroxy-3-methylpentanoate = (S)-3-methyl-2-oxopentanoate + H2O. It participates in amino-acid biosynthesis; L-isoleucine biosynthesis; L-isoleucine from 2-oxobutanoate: step 3/4. Its pathway is amino-acid biosynthesis; L-valine biosynthesis; L-valine from pyruvate: step 3/4. Functions in the biosynthesis of branched-chain amino acids. Catalyzes the dehydration of (2R,3R)-2,3-dihydroxy-3-methylpentanoate (2,3-dihydroxy-3-methylvalerate) into 2-oxo-3-methylpentanoate (2-oxo-3-methylvalerate) and of (2R)-2,3-dihydroxy-3-methylbutanoate (2,3-dihydroxyisovalerate) into 2-oxo-3-methylbutanoate (2-oxoisovalerate), the penultimate precursor to L-isoleucine and L-valine, respectively. The protein is Dihydroxy-acid dehydratase of Cereibacter sphaeroides (strain ATCC 17029 / ATH 2.4.9) (Rhodobacter sphaeroides).